The sequence spans 245 residues: 3-deoxy-manno-octulosonate cytidylyltransferase (245 aa).

Belongs to the KdsB family.

The protein localises to the cytoplasm. It carries out the reaction 3-deoxy-alpha-D-manno-oct-2-ulosonate + CTP = CMP-3-deoxy-beta-D-manno-octulosonate + diphosphate. It functions in the pathway nucleotide-sugar biosynthesis; CMP-3-deoxy-D-manno-octulosonate biosynthesis; CMP-3-deoxy-D-manno-octulosonate from 3-deoxy-D-manno-octulosonate and CTP: step 1/1. The protein operates within bacterial outer membrane biogenesis; lipopolysaccharide biosynthesis. In terms of biological role, activates KDO (a required 8-carbon sugar) for incorporation into bacterial lipopolysaccharide in Gram-negative bacteria. This is 3-deoxy-manno-octulosonate cytidylyltransferase from Rhodopseudomonas palustris (strain ATCC BAA-98 / CGA009).